A 379-amino-acid chain; its full sequence is Alanine racemase (379 aa).

K41 functions as the Proton acceptor; specific for D-alanine in the catalytic mechanism. An N6-(pyridoxal phosphate)lysine modification is found at K41. A substrate-binding site is contributed by R138. The active-site Proton acceptor; specific for L-alanine is the Y260. Residue M319 coordinates substrate.

It belongs to the alanine racemase family. Requires pyridoxal 5'-phosphate as cofactor.

It carries out the reaction L-alanine = D-alanine. The protein operates within amino-acid biosynthesis; D-alanine biosynthesis; D-alanine from L-alanine: step 1/1. Functionally, catalyzes the interconversion of L-alanine and D-alanine. May also act on other amino acids. The protein is Alanine racemase (alr) of Rhizobium meliloti (strain 1021) (Ensifer meliloti).